The chain runs to 362 residues: Leucoanthocyanidin dioxygenase (362 aa).

The interval 1–23 is disordered; sequence MVTSAMGPSPRVEELARSGLDTI. Positions 214–313 constitute a Fe2OG dioxygenase domain; it reads LIVQMKINFY…RISWAVFCEP (100 aa). Fe cation-binding residues include H238, D240, and H294. R304 is an active-site residue.

It belongs to the iron/ascorbate-dependent oxidoreductase family. Fe cation is required as a cofactor. Requires L-ascorbate as cofactor. As to expression, expressed in red but not in green forma of P.frutescens. In red forma, it is predominantly expressed in stems and leaves, but not in roots.

It catalyses the reaction a (2R,3S,4S)-leucoanthocyanidin + 2-oxoglutarate + O2 = a 4-H-anthocyanidin with a 3-hydroxy group + succinate + CO2 + 2 H2O. It functions in the pathway pigment biosynthesis; anthocyanin biosynthesis. Its function is as follows. Oxidation of leucoanthocyanidins into anthocyanidins. This chain is Leucoanthocyanidin dioxygenase (ANS), found in Perilla frutescens (Beefsteak mint).